The following is a 333-amino-acid chain: Eukaryotic translation initiation factor 2 subunit 2 (333 aa).

Disordered regions lie at residues 1–120 and 139–165; these read MSGD…LDIM and ILEK…QTGP. At serine 2 the chain carries N-acetylserine. Serine 2 carries the post-translational modification Phosphoserine. Phosphoserine; by PKC; in vitro is present on serine 13. Positions 13–22 are enriched in basic residues; the sequence is SKKKKKKKKP. Threonine 36 is subject to Phosphothreonine. The span at 40–51 shows a compositional bias: basic and acidic residues; that stretch reads ETKEVEPEPTED. Serine 67 is subject to Phosphoserine; by CK2. The span at 96-105 shows a compositional bias: basic and acidic residues; that stretch reads EGVKDLKIEN. Residue lysine 102 forms a Glycyl lysine isopeptide (Lys-Gly) (interchain with G-Cter in SUMO2) linkage. Composition is skewed to acidic residues over residues 106–118 and 139–149; these read DVQE…DDLD and ILEKDEALEDE. A Phosphoserine modification is found at serine 158. Serine 218 is subject to Phosphoserine; by PKA; in vitro. N6-acetyllysine occurs at positions 265 and 293. The C4-type zinc-finger motif lies at 281-305; sequence CHTCRSPDTILQKDTRLYFLQCETC.

The protein belongs to the eIF-2-beta/eIF-5 family. In terms of assembly, eukaryotic translation initiation factor 2 eIF2 is a heterotrimeric complex composed of an alpha (EIF2S1), a beta (EIF2S2) and a gamma (EIF2S3) chain. eIF2 is member of the 43S pre-initiation complex (43S PIC). eIF2 forms a complex with at least CELF1/CUGBP1, CALR, CALR3, EIF2S1, EIF2S2, HSP90B1 and HSPA5. Interacts with BZW2/5MP1. Interacts with EIF5. The N-terminus is blocked.

Its subcellular location is the cytoplasm. The protein localises to the cytosol. Its function is as follows. Component of the eIF2 complex that functions in the early steps of protein synthesis by forming a ternary complex with GTP and initiator tRNA. This complex binds to a 40S ribosomal subunit, followed by mRNA binding to form the 43S pre-initiation complex (43S PIC). Junction of the 60S ribosomal subunit to form the 80S initiation complex is preceded by hydrolysis of the GTP bound to eIF2 and release of an eIF2-GDP binary complex. In order for eIF2 to recycle and catalyze another round of initiation, the GDP bound to eIF2 must exchange with GTP by way of a reaction catalyzed by eIF2B. This chain is Eukaryotic translation initiation factor 2 subunit 2 (EIF2S2), found in Oryctolagus cuniculus (Rabbit).